Here is a 384-residue protein sequence, read N- to C-terminus: MTEQRAGSPAGNDLRSCAVIDLDAVRTSVTALVARAGDAATMAVVKADGYGHGMIPCARAALEGGATWLGTAFLEEALALRAAGFTVPVLSWLAAPGESFAAAIAADVDLSASAGWALEEAAAAARRTGRTARVHLKADTGLGRAGATEADWPALCDAGAALEAEGVIEVIGVWSHFAFADAPGHPTVQGQIGRFRDAIDIATKAGLHPSVRHLANSAATLVSPEAHFDLVRPGVSVYGLSPGPEIGPPAAFGLRPAMTLTTHAALTKRVPAGTGVSYAHRYTTTRETTLAVVPLGYADGIPRSATNTAEVLFGGRRRRIAGTVCMDQFVLDVGDDQVAAGDEVLLFGPGDRGEPTADDWAAALGTINYEIVSRVGARVPRRYV.

The active-site Proton acceptor; specific for D-alanine is Lys-46. Lys-46 is modified (N6-(pyridoxal phosphate)lysine). A substrate-binding site is contributed by Arg-144. Catalysis depends on Tyr-278, which acts as the Proton acceptor; specific for L-alanine. Met-326 is a binding site for substrate.

This sequence belongs to the alanine racemase family. The cofactor is pyridoxal 5'-phosphate.

It carries out the reaction L-alanine = D-alanine. It functions in the pathway amino-acid biosynthesis; D-alanine biosynthesis; D-alanine from L-alanine: step 1/1. Catalyzes the interconversion of L-alanine and D-alanine. May also act on other amino acids. This Frankia casuarinae (strain DSM 45818 / CECT 9043 / HFP020203 / CcI3) protein is Alanine racemase (alr).